We begin with the raw amino-acid sequence, 750 residues long: Neprilysin (750 aa).

Residues 1 to 14 show a composition bias toward polar residues; the sequence is MGKSESQMDITDIN. The tract at residues 1-20 is disordered; sequence MGKSESQMDITDINTPKPKK. The N-myristoyl glycine moiety is linked to residue Gly2. The Cytoplasmic portion of the chain corresponds to 2-28; that stretch reads GKSESQMDITDINTPKPKKKQRWTPLE. Residues Ser4 and Ser6 each carry the phosphoserine modification. The Stop-transfer sequence signature appears at 16 to 23; the sequence is PKPKKKQR. The helical; Signal-anchor for type II membrane protein transmembrane segment at 29–51 threads the bilayer; sequence ISLSVLVLLLTIIAVTMIALYAT. Residues 52 to 750 are Extracellular-facing; the sequence is YDDGICKSSD…MNPEKKCRVW (699 aa). Positions 56–750 constitute a Peptidase M13 domain; the sequence is ICKSSDCIKS…MNPEKKCRVW (695 aa). 6 disulfide bridges follow: Cys57-Cys62, Cys80-Cys735, Cys88-Cys695, Cys143-Cys411, Cys234-Cys242, and Cys621-Cys747. An a peptide-binding site is contributed by Arg103. Asn145 carries an N-linked (GlcNAc...) asparagine glycan. 2 N-linked (GlcNAc...) asparagine glycosylation sites follow: Asn285 and Asn325. His584 serves as a coordination point for Zn(2+). The active site involves Glu585. Residue His588 coordinates Zn(2+). N-linked (GlcNAc...) asparagine glycosylation occurs at Asn628. Residue Glu647 participates in Zn(2+) binding. Catalysis depends on Asp651, which acts as the Proton donor.

This sequence belongs to the peptidase M13 family. It depends on Zn(2+) as a cofactor. Post-translationally, myristoylation is a determinant of membrane targeting. Glycosylation at Asn-628 is necessary both for surface expression and neutral endopeptidase activity.

The protein localises to the cell membrane. It carries out the reaction Preferential cleavage of polypeptides between hydrophobic residues, particularly with Phe or Tyr at P1'.. It catalyses the reaction substance P + H2O = substance P(1-9) + L-Leu-L-Met-NH2. The catalysed reaction is substance P + H2O = substance P(1-7) + L-Phe-Gly-L-Leu-L-Met-NH2. The enzyme catalyses neurotensin + H2O = neurotensin(1-11) + L-isoleucyl-L-leucine. It carries out the reaction neurotensin + H2O = neurotensin(1-10) + L-tyrosyl-L-isoleucyl-L-leucine. Its activity is regulated as follows. Inhibited in a dose dependent manner by opiorphin. Activated by K49-P1-20, a twenty-residue synthetic peptide shortened from the snake B.asper myotoxin II. In terms of biological role, thermolysin-like specificity, but is almost confined on acting on polypeptides of up to 30 amino acids. Biologically important in the destruction of opioid peptides such as Met- and Leu-enkephalins by cleavage of a Gly-Phe bond. Catalyzes cleavage of bradykinin, substance P and neurotensin peptides. Able to cleave angiotensin-1, angiotensin-2 and angiotensin 1-9. Involved in the degradation of atrial natriuretic factor (ANF) and brain natriuretic factor (BNP(1-32)). Displays UV-inducible elastase activity toward skin preelastic and elastic fibers. This chain is Neprilysin, found in Homo sapiens (Human).